The chain runs to 890 residues: MTDVTIKTLAAERQTSVERLVQQFADAGIRKSADDSVSAKEKQTLIDHLNQKNSGPDKLTLQRKTRSTLNIPGTGGKSKSVQIEVRKKRTFVKRDPQEAERLAAEEQAQREAEEQARREAEESAKREAQQKAEREAAEQAKREAAEQAKREAAEKDKVSNQQDDMTKNAQAEKARREQEAAELKRKAEEEARRKLEEEARRVAEEARRMAEENKWTDNAEPTEDSSDYHVTTSQHARQAEDESDREVEGGRGRGRNAKAARPKKGNKHAESKADREEARAAVRGGKGGKRKGSSLQQGFQKPAQAVNRDVVIGETITVGELANKMAVKGSQVIKAMMKLGAMATINQVIDQETAQLVAEEMGHKVILRRENELEEAVMSDRDTGAAAEPRAPVVTIMGHVDHGKTSLLDYIRSTKVASGEAGGITQHIGAYHVETENGMITFLDTPGHAAFTSMRARGAQATDIVVLVVAADDGVMPQTIEAIQHAKAAQVPVVVAVNKIDKPEADPDRVKNELSQYGILPEEWGGESQFVHVSAKAGTGIDELLDAILLQAEVLELKAVRKGMASGAVIESFLDKGRGPVATVLVREGTLHKGDIVLCGFEYGRVRAMRNELGQEVLEAGPSIPVEILGLSGVPAAGDEVTVVRDEKKAREVALYRQGKFREVKLARQQKSKLENMFANMTEGEVHEVNIVLKADVQGSVEAISDSLLKLSTDEVKVKIIGSGVGGITETDATLAAASNAILVGFNVRADASARKVIEAESLDLRYYSVIYNLIDEVKAAMSGMLSPELKQQIIGLAEVRDVFKSPKFGAIAGCMVTEGVVKRHNPIRVLRDNVVIYEGELESLRRFKDDVNEVRNGMECGIGVKNYNDVRTGDVIEVFEIIEIQRTIA.

Positions 45–303 (LIDHLNQKNS…SLQQGFQKPA (259 aa)) are disordered. The span at 67–81 (STLNIPGTGGKSKSV) shows a compositional bias: polar residues. The segment covering 92–217 (VKRDPQEAER…RMAEENKWTD (126 aa)) has biased composition (basic and acidic residues). Positions 252–266 (GRGRNAKAARPKKGN) are enriched in basic residues. Residues 267-280 (KHAESKADREEARA) are compositionally biased toward basic and acidic residues. Residues 389–558 (PRAPVVTIMG…LLQAEVLELK (170 aa)) form the tr-type G domain. The interval 398–405 (GHVDHGKT) is G1. 398-405 (GHVDHGKT) serves as a coordination point for GTP. The tract at residues 423–427 (GITQH) is G2. The segment at 444–447 (DTPG) is G3. GTP-binding positions include 444-448 (DTPGH) and 498-501 (NKID). Residues 498–501 (NKID) form a G4 region. The segment at 534–536 (SAK) is G5. Lysine 808 is subject to N6-acetyllysine.

It belongs to the TRAFAC class translation factor GTPase superfamily. Classic translation factor GTPase family. IF-2 subfamily.

Its subcellular location is the cytoplasm. In terms of biological role, one of the essential components for the initiation of protein synthesis. Protects formylmethionyl-tRNA from spontaneous hydrolysis and promotes its binding to the 30S ribosomal subunits. Also involved in the hydrolysis of GTP during the formation of the 70S ribosomal complex. This chain is Translation initiation factor IF-2, found in Shigella boydii serotype 18 (strain CDC 3083-94 / BS512).